Reading from the N-terminus, the 255-residue chain is 4-hydroxy-tetrahydrodipicolinate reductase (255 aa).

NAD(+) contacts are provided by residues 9–14, Asp-35, 89–91, and 115–118; these read GFKGKM, GTT, and APNF. His-145 serves as the catalytic Proton donor/acceptor. His-146 is a binding site for (S)-2,3,4,5-tetrahydrodipicolinate. Lys-149 acts as the Proton donor in catalysis. 155–156 provides a ligand contact to (S)-2,3,4,5-tetrahydrodipicolinate; that stretch reads GT.

The protein belongs to the DapB family.

Its subcellular location is the cytoplasm. It carries out the reaction (S)-2,3,4,5-tetrahydrodipicolinate + NAD(+) + H2O = (2S,4S)-4-hydroxy-2,3,4,5-tetrahydrodipicolinate + NADH + H(+). It catalyses the reaction (S)-2,3,4,5-tetrahydrodipicolinate + NADP(+) + H2O = (2S,4S)-4-hydroxy-2,3,4,5-tetrahydrodipicolinate + NADPH + H(+). The protein operates within amino-acid biosynthesis; L-lysine biosynthesis via DAP pathway; (S)-tetrahydrodipicolinate from L-aspartate: step 4/4. Its function is as follows. Catalyzes the conversion of 4-hydroxy-tetrahydrodipicolinate (HTPA) to tetrahydrodipicolinate. This Streptococcus pneumoniae serotype 19F (strain G54) protein is 4-hydroxy-tetrahydrodipicolinate reductase.